Here is a 103-residue protein sequence, read N- to C-terminus: MAAKIRQNDEVIVLAGKDKGKRGKVTKVLPNGKVFVEGVNIITKHEKPVPALGKAGGLVKKEAAIDVSNVAIFNPTTNKADRVGFRIEDGKKVRFFKSNNEII.

Belongs to the universal ribosomal protein uL24 family. In terms of assembly, part of the 50S ribosomal subunit.

Its function is as follows. One of two assembly initiator proteins, it binds directly to the 5'-end of the 23S rRNA, where it nucleates assembly of the 50S subunit. Functionally, one of the proteins that surrounds the polypeptide exit tunnel on the outside of the subunit. This Histophilus somni (strain 129Pt) (Haemophilus somnus) protein is Large ribosomal subunit protein uL24.